Reading from the N-terminus, the 886-residue chain is DNA mismatch repair protein MutS (886 aa).

Position 626-633 (626-633) interacts with ATP; sequence GPNMGGKS.

Belongs to the DNA mismatch repair MutS family.

In terms of biological role, this protein is involved in the repair of mismatches in DNA. It is possible that it carries out the mismatch recognition step. This protein has a weak ATPase activity. The polypeptide is DNA mismatch repair protein MutS (Burkholderia ambifaria (strain ATCC BAA-244 / DSM 16087 / CCUG 44356 / LMG 19182 / AMMD) (Burkholderia cepacia (strain AMMD))).